Here is a 147-residue protein sequence, read N- to C-terminus: Ribonuclease VapC43 (147 aa).

A PINc domain is found at 3 to 139 (CVDVNVLVYA…ARFRRLRWRH (137 aa)). Residues aspartate 5 and aspartate 108 each coordinate Mg(2+).

Belongs to the PINc/VapC protein family. Requires Mg(2+) as cofactor.

Toxic component of a type II toxin-antitoxin (TA) system. An RNase. Its toxic effect is neutralized by coexpression with cognate antitoxin VapB43. The sequence is that of Ribonuclease VapC43 from Mycobacterium tuberculosis (strain CDC 1551 / Oshkosh).